Reading from the N-terminus, the 299-residue chain is Probable plastid-lipid-associated protein 13, chloroplastic (299 aa).

The N-terminal 48 residues, 1-48, are a transit peptide targeting the chloroplast; the sequence is MALIHGSVPGTSAVRLVFSTSASPSRFCLNVPVVKQGWKNSCRRRVLR. A2 is modified (N-acetylvaline).

It belongs to the PAP/fibrillin family.

The protein resides in the plastid. The protein localises to the chloroplast. Its subcellular location is the plastoglobule. The chain is Probable plastid-lipid-associated protein 13, chloroplastic (PAP13) from Arabidopsis thaliana (Mouse-ear cress).